The primary structure comprises 692 residues: DNA ligase (692 aa).

NAD(+)-binding positions include 34 to 38, 83 to 84, and Glu124; these read DAEYD and SL. Lys126 functions as the N6-AMP-lysine intermediate in the catalytic mechanism. Arg147, Glu193, Lys310, and Lys334 together coordinate NAD(+). Residues Cys428, Cys431, Cys446, and Cys452 each contribute to the Zn(2+) site. Residues 612–692 enclose the BRCT domain; it reads AGVAGVSGKT…ALLALLAGNA (81 aa).

The protein belongs to the NAD-dependent DNA ligase family. LigA subfamily. The cofactor is Mg(2+). Mn(2+) is required as a cofactor.

It carries out the reaction NAD(+) + (deoxyribonucleotide)n-3'-hydroxyl + 5'-phospho-(deoxyribonucleotide)m = (deoxyribonucleotide)n+m + AMP + beta-nicotinamide D-nucleotide.. Its function is as follows. DNA ligase that catalyzes the formation of phosphodiester linkages between 5'-phosphoryl and 3'-hydroxyl groups in double-stranded DNA using NAD as a coenzyme and as the energy source for the reaction. It is essential for DNA replication and repair of damaged DNA. This is DNA ligase from Laribacter hongkongensis (strain HLHK9).